A 315-amino-acid polypeptide reads, in one-letter code: CID domain-containing protein 1 (315 aa).

The region spanning 1–135 (MADFTEQTLR…RLHEVHQQVK (135 aa)) is the CID domain. Residues 227 to 273 (MLEEYVKRLKNETNERETLESNLNMLIENVRMSIEHHEKLCREVKRR) adopt a coiled-coil conformation.

In Caenorhabditis elegans, this protein is CID domain-containing protein 1 (cids-1).